Consider the following 233-residue polypeptide: MQITPDNIIFYQYQFVVINATLVYTWLTMALLVIGAAWVTKKLVVRPKLPPWQNFLEIVVDGIYQHIAEVTQQEPEPYLAFVGTLFLFILTANLLTVVPGYQAPTGSLSTTTALAIAVFIAVPIYGIRQRGILGYLKSYLQPTPIMLPFQIIGEFSRTLALAVRLFGNIMSGNLLAAILLALVPLFVPVAMNLLGLVFGVIQAYVFAILALVYIASAATVQEKKQSISMEENS.

The next 5 helical transmembrane spans lie at 15–35, 78–98, 107–127, 169–189, and 194–214; these read FVVI…LVIG, YLAF…LTVV, SLST…IYGI, IMSG…FVPV, and LGLV…LVYI.

Belongs to the ATPase A chain family. In terms of assembly, F-type ATPases have 2 components, CF(1) - the catalytic core - and CF(0) - the membrane proton channel. CF(1) has five subunits: alpha(3), beta(3), gamma(1), delta(1), epsilon(1). CF(0) has four main subunits: a, b, b' and c.

It is found in the cellular thylakoid membrane. Key component of the proton channel; it plays a direct role in the translocation of protons across the membrane. This Picosynechococcus sp. (strain ATCC 27264 / PCC 7002 / PR-6) (Agmenellum quadruplicatum) protein is ATP synthase subunit a 2.